The chain runs to 446 residues: Zinc finger protein 19 (446 aa).

Residues valine 2–threonine 73 form the KRAB domain. 9 C2H2-type zinc fingers span residues phenylalanine 149–histidine 171, phenylalanine 177–histidine 199, tyrosine 205–histidine 227, tyrosine 233–histidine 255, tyrosine 261–histidine 283, tyrosine 289–histidine 311, tyrosine 317–histidine 339, phenylalanine 345–histidine 367, and tyrosine 373–histidine 395. The segment at tyrosine 401–histidine 423 adopts a C2H2-type 10; degenerate zinc-finger fold.

It belongs to the krueppel C2H2-type zinc-finger protein family.

The protein localises to the nucleus. In terms of biological role, may be involved in transcriptional regulation. In Pongo abelii (Sumatran orangutan), this protein is Zinc finger protein 19 (ZNF19).